A 323-amino-acid chain; its full sequence is DNA-directed RNA polymerase subunit alpha 1 (323 aa).

The segment at 1 to 228 (MSNNNSKQEF…EQISVFVSLR (228 aa)) is alpha N-terminal domain (alpha-NTD). Residues 244–323 (IDPILLKPID…DNFRELVEGK (80 aa)) form an alpha C-terminal domain (alpha-CTD) region.

This sequence belongs to the RNA polymerase alpha chain family. As to quaternary structure, homodimer. The RNAP catalytic core consists of 2 alpha, 1 beta, 1 beta' and 1 omega subunit. When a sigma factor is associated with the core the holoenzyme is formed, which can initiate transcription.

It carries out the reaction RNA(n) + a ribonucleoside 5'-triphosphate = RNA(n+1) + diphosphate. DNA-dependent RNA polymerase catalyzes the transcription of DNA into RNA using the four ribonucleoside triphosphates as substrates. The sequence is that of DNA-directed RNA polymerase subunit alpha 1 from Francisella tularensis subsp. novicida (strain U112).